The chain runs to 463 residues: Golgi-associated PDZ and coiled-coil motif-containing protein (463 aa).

The residue at position 2 (serine 2) is an N-acetylserine. Positions 85–201 (AQTVSQINHK…RHIAVLQAEV (117 aa)) form a coiled coil. The region spanning 289 to 372 (KVLLLKEDHE…EIEFEVVYVA (84 aa)) is the PDZ domain. Phosphoserine is present on residues serine 402 and serine 405.

As to quaternary structure, homooligomer. Interacts with FZD5. Interacts with FZD8. Interacts with GRID2 and BECN1. Interacts with CSPG5. Interacts with CLCN3. Interacts with STX6. Interacts with CFTR. Interacts with ASIC3. Interacts with GOLGA3. Interacts with NLGN1. Interacts with RHOQ. Interacts with MARCHF2; the interaction leads to CFTR ubiquitination and degradation. May interact with CACNG2. Interacts with CCDC62. In terms of tissue distribution, ubiquitously expressed (at protein level). Expressed in dorsal root glanglion (DRG), spinal cord and brain. Isoform 1 is preferentially expressed in whole brain (at protein level) and cerebellum. Expressed in spermatocytes and spermatides but not in Sertoli cells and spermatogonia.

It is found in the cytoplasm. Its subcellular location is the golgi apparatus membrane. It localises to the golgi apparatus. The protein resides in the trans-Golgi network membrane. The protein localises to the synapse. It is found in the postsynaptic density. Its subcellular location is the cell projection. It localises to the dendrite. Functionally, plays a role in intracellular protein trafficking and degradation. May regulate CFTR chloride currents and acid-induced ASIC3 currents by modulating cell surface expression of both channels. May also regulate the intracellular trafficking of the ADR1B receptor. May play a role in autophagy. Together with MARCHF2 mediates the ubiquitination and lysosomal degradation of CFTR. Overexpression results in CFTR intracellular retention and degradation in the lysosomes. This is Golgi-associated PDZ and coiled-coil motif-containing protein from Mus musculus (Mouse).